The following is a 213-amino-acid chain: Thiopurine S-methyltransferase (213 aa).

S-adenosyl-L-methionine-binding residues include tryptophan 10, methionine 45, glutamate 66, and arginine 120.

Belongs to the class I-like SAM-binding methyltransferase superfamily. TPMT family.

The protein localises to the cytoplasm. It carries out the reaction S-adenosyl-L-methionine + a thiopurine = S-adenosyl-L-homocysteine + a thiopurine S-methylether.. The sequence is that of Thiopurine S-methyltransferase from Photobacterium profundum (strain SS9).